The primary structure comprises 231 residues: Nucleoside diphosphate kinase II, chloroplastic (231 aa).

Residues methionine 1–arginine 62 constitute a chloroplast transit peptide. ATP contacts are provided by lysine 91, phenylalanine 139, arginine 167, threonine 173, arginine 184, and asparagine 194. Residue histidine 197 is the Pros-phosphohistidine intermediate of the active site.

Belongs to the NDK family. As to quaternary structure, interacts with PHYA, MPK3 and MPK6. It depends on Mg(2+) as a cofactor. Autophosphorylated.

The protein resides in the plastid. It localises to the chloroplast. It carries out the reaction a 2'-deoxyribonucleoside 5'-diphosphate + ATP = a 2'-deoxyribonucleoside 5'-triphosphate + ADP. The enzyme catalyses a ribonucleoside 5'-diphosphate + ATP = a ribonucleoside 5'-triphosphate + ADP. In terms of biological role, major role in the synthesis of nucleoside triphosphates other than ATP. The ATP gamma phosphate is transferred to the NDP beta phosphate via a ping-pong mechanism, using a phosphorylated active-site intermediate. May activate MPK3 and MPK6. May be involved in the regulation of cellular redox state and hydrogen peroxide-mediated MAP kinase signaling. In Arabidopsis thaliana (Mouse-ear cress), this protein is Nucleoside diphosphate kinase II, chloroplastic (NDPK2).